The primary structure comprises 126 residues: Large ribosomal subunit protein eL32 (126 aa).

This sequence belongs to the eukaryotic ribosomal protein eL32 family.

The chain is Large ribosomal subunit protein eL32 from Thermococcus onnurineus (strain NA1).